Here is a 437-residue protein sequence, read N- to C-terminus: Trigger factor (437 aa).

The 86-residue stretch at 161-246 folds into the PPIase FKBP-type domain; it reads GDRVNIDFKG…VNKVEGKALP (86 aa).

The protein belongs to the FKBP-type PPIase family. Tig subfamily.

The protein resides in the cytoplasm. The catalysed reaction is [protein]-peptidylproline (omega=180) = [protein]-peptidylproline (omega=0). Functionally, involved in protein export. Acts as a chaperone by maintaining the newly synthesized protein in an open conformation. Functions as a peptidyl-prolyl cis-trans isomerase. The polypeptide is Trigger factor (Alcanivorax borkumensis (strain ATCC 700651 / DSM 11573 / NCIMB 13689 / SK2)).